The chain runs to 86 residues: Neurotoxin-like protein pMD18-NTL1/2/4/5 (86 aa).

Positions 1–21 are cleaved as a signal peptide; it reads MKTLLLTLVVLTIACLDLGYT. 4 disulfides stabilise this stretch: C24–C45, C38–C62, C66–C78, and C79–C84.

Belongs to the three-finger toxin family. Short-chain subfamily. Orphan group IX sub-subfamily. As to expression, expressed by the venom gland.

Its subcellular location is the secreted. The polypeptide is Neurotoxin-like protein pMD18-NTL1/2/4/5 (Bungarus multicinctus (Many-banded krait)).